We begin with the raw amino-acid sequence, 241 residues long: Endothelial protein C receptor (241 aa).

A signal peptide spans Met-1–Ala-17. Residues Leu-18–Ser-212 are Extracellular-facing. Residues Asn-49, Asn-66, Asn-138, and Asn-174 are each glycosylated (N-linked (GlcNAc...) asparagine). 2 cysteine pairs are disulfide-bonded: Cys-120/Cys-188 and Cys-221/Cys-234. The chain crosses the membrane as a helical span at residues Leu-213–Leu-233. Over Cys-234–Cys-241 the chain is Cytoplasmic.

Expressed in endothelial cells.

It localises to the membrane. Binds activated protein C. Enhances protein C activation by the thrombin-thrombomodulin complex; plays a role in the protein C pathway controlling blood coagulation. The polypeptide is Endothelial protein C receptor (PROCR) (Bos taurus (Bovine)).